The following is a 448-amino-acid chain: MSFRSIVRDVRDGFGSLSRRSFEVTLASLYGLTGHHKGKTQSSLDELDDSPAIIPESRWASLPPELLREVIRRLEADESTWPSRRNVVCFAAVCRTWREMCKETVLSPEFCGKLTFPVSIKQPGPRDGMIQCYIKRNRSKSTYHLYLCLSNVVTAEGGKFVLAAKRHRKTTCTEYTISMVSGNISRSSRTNIGKLRSNFLGTKFIIYDTQPPYNGAVVPHVGRTSKRFNSTKVSPKVPSVTYNIAQVSYELNVLGTRGPRRMRCMMHSIPASSVEPGGIVPGQPEQIVPRALEDSFRSTTSFSQSFRSTTSFSKSIMDPSMDFSSARFSDISGSIMGGDDNGEIKERPLVLRNKPPRWHEQLQCWCLNFRGRVTIASVKNFQLVAAPSPPPAGAPTPSQPGPADPEKVILQFGKVARDMFTMDYRYPLSAFQAFAICLSSFDTKLACE.

Residues 56-102 form the F-box domain; it reads ESRWASLPPELLREVIRRLEADESTWPSRRNVVCFAAVCRTWREMCK. Residues 387 to 403 show a composition bias toward pro residues; it reads PSPPPAGAPTPSQPGPA. Residues 387–406 are disordered; that stretch reads PSPPPAGAPTPSQPGPADPE.

This sequence belongs to the TUB family. As to expression, expressed in roots, leaves, flowers and seeds.

The protein is Tubby-like F-box protein 3 (TULP3) of Oryza sativa subsp. japonica (Rice).